The following is a 249-amino-acid chain: Probable transcriptional regulatory protein Sare_1779 (249 aa).

This sequence belongs to the TACO1 family.

The protein localises to the cytoplasm. This Salinispora arenicola (strain CNS-205) protein is Probable transcriptional regulatory protein Sare_1779.